Here is a 111-residue protein sequence, read N- to C-terminus: Large ribosomal subunit protein uL22 (111 aa).

It belongs to the universal ribosomal protein uL22 family. As to quaternary structure, part of the 50S ribosomal subunit.

In terms of biological role, this protein binds specifically to 23S rRNA; its binding is stimulated by other ribosomal proteins, e.g. L4, L17, and L20. It is important during the early stages of 50S assembly. It makes multiple contacts with different domains of the 23S rRNA in the assembled 50S subunit and ribosome. Functionally, the globular domain of the protein is located near the polypeptide exit tunnel on the outside of the subunit, while an extended beta-hairpin is found that lines the wall of the exit tunnel in the center of the 70S ribosome. This chain is Large ribosomal subunit protein uL22, found in Clostridium novyi (strain NT).